A 297-amino-acid polypeptide reads, in one-letter code: Tyrosine recombinase XerD (297 aa).

Residues 1 to 86 form the Core-binding (CB) domain; it reads MNDLIEDFLH…SLRSFFHYLM (86 aa). The Tyr recombinase domain occupies 107-291; the sequence is GLPKVLNLDD…TKLRLKDVYK (185 aa). Active-site residues include Arg147, Lys171, His243, Arg246, and His269. Catalysis depends on Tyr278, which acts as the O-(3'-phospho-DNA)-tyrosine intermediate.

This sequence belongs to the 'phage' integrase family. XerD subfamily. In terms of assembly, forms a cyclic heterotetrameric complex composed of two molecules of XerC and two molecules of XerD.

The protein resides in the cytoplasm. Site-specific tyrosine recombinase, which acts by catalyzing the cutting and rejoining of the recombining DNA molecules. The XerC-XerD complex is essential to convert dimers of the bacterial chromosome into monomers to permit their segregation at cell division. It also contributes to the segregational stability of plasmids. The protein is Tyrosine recombinase XerD of Listeria monocytogenes serovar 1/2a (strain ATCC BAA-679 / EGD-e).